The primary structure comprises 709 residues: Elongation factor G (709 aa).

Positions Asn-10–Glu-295 constitute a tr-type G domain. GTP is bound by residues Ala-19 to Thr-26, Asp-91 to His-95, and Asn-145 to Asp-148.

Belongs to the TRAFAC class translation factor GTPase superfamily. Classic translation factor GTPase family. EF-G/EF-2 subfamily.

The protein resides in the cytoplasm. Its function is as follows. Catalyzes the GTP-dependent ribosomal translocation step during translation elongation. During this step, the ribosome changes from the pre-translocational (PRE) to the post-translocational (POST) state as the newly formed A-site-bound peptidyl-tRNA and P-site-bound deacylated tRNA move to the P and E sites, respectively. Catalyzes the coordinated movement of the two tRNA molecules, the mRNA and conformational changes in the ribosome. This is Elongation factor G from Bifidobacterium animalis subsp. lactis (strain AD011).